We begin with the raw amino-acid sequence, 217 residues long: DNA transformation protein TfoX (217 aa).

It belongs to the Sxy/TfoX family.

In terms of biological role, required for DNA transformation. Positively regulates genes required for DNA transformation (late competence-specific genes) in association with CRP. Required for expression of the late competence-specific gene, com101A. Required for expression of the dprABC operon. The sequence is that of DNA transformation protein TfoX from Haemophilus influenzae (strain ATCC 51907 / DSM 11121 / KW20 / Rd).